Reading from the N-terminus, the 492-residue chain is Bifunctional protein GlmU (492 aa).

Positions 1–241 (MTFRGDTAVV…SALVAGVNDR (241 aa)) are pyrophosphorylase. UDP-N-acetyl-alpha-D-glucosamine is bound by residues 12–15 (LAAG), K26, Q83, and 88–89 (GT). D114 contacts Mg(2+). 4 residues coordinate UDP-N-acetyl-alpha-D-glucosamine: G151, E166, N181, and N239. A Mg(2+)-binding site is contributed by N239. A linker region spans residues 242 to 262 (VQLAQLGAELNRRIVAAHQMA). The interval 263–492 (GVTVIDPATT…TPPPDADQTP (230 aa)) is N-acetyltransferase. UDP-N-acetyl-alpha-D-glucosamine-binding residues include R344 and K362. H374 serves as the catalytic Proton acceptor. UDP-N-acetyl-alpha-D-glucosamine-binding residues include Y377 and N388. Residues A391, 397 to 398 (NY), and A434 each bind acetyl-CoA. The interval 451–492 (GGPQRNIEDWVQQKRPGTPSAEAARKASAEQSTPPPDADQTP) is disordered. Residues 483 to 492 (TPPPDADQTP) show a composition bias toward pro residues.

The protein in the N-terminal section; belongs to the N-acetylglucosamine-1-phosphate uridyltransferase family. This sequence in the C-terminal section; belongs to the transferase hexapeptide repeat family. Homotrimer. It depends on Mg(2+) as a cofactor.

Its subcellular location is the cytoplasm. The enzyme catalyses alpha-D-glucosamine 1-phosphate + acetyl-CoA = N-acetyl-alpha-D-glucosamine 1-phosphate + CoA + H(+). It catalyses the reaction N-acetyl-alpha-D-glucosamine 1-phosphate + UTP + H(+) = UDP-N-acetyl-alpha-D-glucosamine + diphosphate. Its pathway is nucleotide-sugar biosynthesis; UDP-N-acetyl-alpha-D-glucosamine biosynthesis; N-acetyl-alpha-D-glucosamine 1-phosphate from alpha-D-glucosamine 6-phosphate (route II): step 2/2. The protein operates within nucleotide-sugar biosynthesis; UDP-N-acetyl-alpha-D-glucosamine biosynthesis; UDP-N-acetyl-alpha-D-glucosamine from N-acetyl-alpha-D-glucosamine 1-phosphate: step 1/1. It functions in the pathway bacterial outer membrane biogenesis; LPS lipid A biosynthesis. Functionally, catalyzes the last two sequential reactions in the de novo biosynthetic pathway for UDP-N-acetylglucosamine (UDP-GlcNAc). The C-terminal domain catalyzes the transfer of acetyl group from acetyl coenzyme A to glucosamine-1-phosphate (GlcN-1-P) to produce N-acetylglucosamine-1-phosphate (GlcNAc-1-P), which is converted into UDP-GlcNAc by the transfer of uridine 5-monophosphate (from uridine 5-triphosphate), a reaction catalyzed by the N-terminal domain. This Mycobacterium marinum (strain ATCC BAA-535 / M) protein is Bifunctional protein GlmU.